Reading from the N-terminus, the 418-residue chain is MHIFDELKERGLIFQTTDEEALRKALEEGQVSYYTGYDPTADSLHLGHLVAILTSRRLQLAGHKPYALVGGATGLIGDPSFKDAERSLQTKDTVDGWVKSIQGQLSRFLDFENGENKAVMVNNYDWFGSISFIDFLRDIGKYFTVNYMMSKESVKKRIETGISYTEFAYQIMQGYDFFVLNQDHNVTLQIGGSDQWGNMTAGTELLRRKADKTGHVITVPLITDATGKKFGKSEGNAVWLNPEKTSPYEMYQFWMNVMDADAVRFLKIFTFLSLDEIEDIRKQFEAAPHERLAQKVLAREVVTLVHGEEAYKEALNITEQLFAGNIKNLSVKELKQGLRGVPNYQVQADEHNNIVELLVSSGIVNSKRQAREDVQNGAIYVNGDRIQDLDYVLSDADKLENELTVIRRGKKKYFVLTY.

Position 34 (Y34) interacts with L-tyrosine. The 'HIGH' region signature appears at 39–48 (PTADSLHLGH). The L-tyrosine site is built by Y169 and Q173. The 'KMSKS' region motif lies at 229–233 (KFGKS). Residue K232 coordinates ATP. Residues 352–418 (NNIVELLVSS…GKKKYFVLTY (67 aa)) form the S4 RNA-binding domain.

This sequence belongs to the class-I aminoacyl-tRNA synthetase family. TyrS type 1 subfamily. In terms of assembly, homodimer.

It is found in the cytoplasm. It carries out the reaction tRNA(Tyr) + L-tyrosine + ATP = L-tyrosyl-tRNA(Tyr) + AMP + diphosphate + H(+). Its function is as follows. Catalyzes the attachment of tyrosine to tRNA(Tyr) in a two-step reaction: tyrosine is first activated by ATP to form Tyr-AMP and then transferred to the acceptor end of tRNA(Tyr). The protein is Tyrosine--tRNA ligase of Streptococcus pneumoniae (strain Taiwan19F-14).